Consider the following 246-residue polypeptide: Chemokine-binding protein (246 aa).

Polar residues predominate over residues 108–125; the sequence is SESSDGNTVNTRLSSVSP. Residues 108–132 are disordered; the sequence is SESSDGNTVNTRLSSVSPGQGKDSP.

Belongs to the orthopoxvirus OPG001 family.

Its subcellular location is the secreted. In terms of biological role, inhibits host immune defense by binding to host chemokines. Binds host CC chemokines (beta chemokines) such as RANTES with high affinity, but not CXC or C chemokines (alpha and gamma chemokines). This Monkeypox virus protein is Chemokine-binding protein (OPG001).